Consider the following 156-residue polypeptide: Ribosomal RNA large subunit methyltransferase H (156 aa).

S-adenosyl-L-methionine contacts are provided by residues leucine 73, glycine 104, and 123–128; that span reads LSALTL.

It belongs to the RNA methyltransferase RlmH family. In terms of assembly, homodimer.

It localises to the cytoplasm. The catalysed reaction is pseudouridine(1915) in 23S rRNA + S-adenosyl-L-methionine = N(3)-methylpseudouridine(1915) in 23S rRNA + S-adenosyl-L-homocysteine + H(+). Specifically methylates the pseudouridine at position 1915 (m3Psi1915) in 23S rRNA. This is Ribosomal RNA large subunit methyltransferase H from Shewanella loihica (strain ATCC BAA-1088 / PV-4).